Here is a 376-residue protein sequence, read N- to C-terminus: Protein-arginine rhamnosyltransferase (376 aa).

DTDP-beta-L-rhamnose-binding positions include 13–16 (NYGD), Tyr-192, 252–254 (MAQ), and 270–274 (RGEDS). DTDP is bound at residue 14 to 15 (YG). Residue Asp-16 is the Proton acceptor of the active site. DTDP-binding positions include Tyr-192, 252–254 (MAQ), and 270–274 (RGEDS). Glu-272 is a catalytic residue.

The protein belongs to the glycosyltransferase 104 family.

The enzyme catalyses dTDP-beta-L-rhamnose + L-arginyl-[protein] = N(omega)-(alpha-L-rhamnosyl)-L-arginyl-[protein] + dTDP + H(+). In terms of biological role, protein-arginine rhamnosyltransferase that catalyzes the transfer of a single rhamnose to elongation factor P (EF-P) on 'Lys-32', a modification required for EF-P-dependent rescue of polyproline stalled ribosomes. In Pseudomonas aeruginosa (strain ATCC 15692 / DSM 22644 / CIP 104116 / JCM 14847 / LMG 12228 / 1C / PRS 101 / PAO1), this protein is Protein-arginine rhamnosyltransferase.